Here is a 284-residue protein sequence, read N- to C-terminus: Ribosomal RNA small subunit methyltransferase A (284 aa).

S-adenosyl-L-methionine contacts are provided by asparagine 26, leucine 28, glycine 53, glutamate 74, aspartate 97, and asparagine 127.

It belongs to the class I-like SAM-binding methyltransferase superfamily. rRNA adenine N(6)-methyltransferase family. RsmA subfamily.

Its subcellular location is the cytoplasm. It catalyses the reaction adenosine(1518)/adenosine(1519) in 16S rRNA + 4 S-adenosyl-L-methionine = N(6)-dimethyladenosine(1518)/N(6)-dimethyladenosine(1519) in 16S rRNA + 4 S-adenosyl-L-homocysteine + 4 H(+). Functionally, specifically dimethylates two adjacent adenosines (A1518 and A1519) in the loop of a conserved hairpin near the 3'-end of 16S rRNA in the 30S particle. May play a critical role in biogenesis of 30S subunits. This is Ribosomal RNA small subunit methyltransferase A from Anaeromyxobacter dehalogenans (strain 2CP-C).